The chain runs to 286 residues: Small ribosomal subunit protein uS2 (286 aa).

Residues 231–286 form a disordered region; it reads ERAQAEAKAAAGDNDAPVSSEGESTEVASDAASTASETTATSSDESAAESSEAESK. The span at 255 to 280 shows a compositional bias: low complexity; it reads TEVASDAASTASETTATSSDESAAES.

The protein belongs to the universal ribosomal protein uS2 family.

This Corynebacterium kroppenstedtii (strain DSM 44385 / JCM 11950 / CIP 105744 / CCUG 35717) protein is Small ribosomal subunit protein uS2.